Here is a 287-residue protein sequence, read N- to C-terminus: Glutamate racemase (287 aa).

Polar residues predominate over residues 1 to 15 (MATKPQDANTTSREA). The interval 1 to 25 (MATKPQDANTTSREAITSKADSPPR) is disordered. Residues 32–33 (DS) and 64–65 (YG) each bind substrate. The Proton donor/acceptor role is filled by Cys96. 97–98 (NT) provides a ligand contact to substrate. The active-site Proton donor/acceptor is Cys208. 209-210 (TH) serves as a coordination point for substrate.

Belongs to the aspartate/glutamate racemases family.

The catalysed reaction is L-glutamate = D-glutamate. The protein operates within cell wall biogenesis; peptidoglycan biosynthesis. Functionally, provides the (R)-glutamate required for cell wall biosynthesis. This chain is Glutamate racemase, found in Yersinia pseudotuberculosis serotype O:3 (strain YPIII).